The primary structure comprises 196 residues: ATP-dependent Clp protease proteolytic subunit 1 (196 aa).

Residue Ser-96 is the Nucleophile of the active site. His-121 is a catalytic residue.

Belongs to the peptidase S14 family. As to quaternary structure, fourteen ClpP subunits assemble into 2 heptameric rings which stack back to back to give a disk-like structure with a central cavity, resembling the structure of eukaryotic proteasomes.

It is found in the cytoplasm. It carries out the reaction Hydrolysis of proteins to small peptides in the presence of ATP and magnesium. alpha-casein is the usual test substrate. In the absence of ATP, only oligopeptides shorter than five residues are hydrolyzed (such as succinyl-Leu-Tyr-|-NHMec, and Leu-Tyr-Leu-|-Tyr-Trp, in which cleavage of the -Tyr-|-Leu- and -Tyr-|-Trp bonds also occurs).. Its function is as follows. Cleaves peptides in various proteins in a process that requires ATP hydrolysis. Has a chymotrypsin-like activity. Plays a major role in the degradation of misfolded proteins. This Prochlorococcus marinus (strain NATL2A) protein is ATP-dependent Clp protease proteolytic subunit 1.